A 498-amino-acid chain; its full sequence is Pentatricopeptide repeat-containing protein At2g15980 (498 aa).

7 PPR repeats span residues 244-274 (NATT…MEEE), 280-314 (NVYS…GVVY), 315-349 (DIVA…GIEC), 350-384 (TCLT…GFEA), 385-423 (DGLT…MFYP), 424-458 (SRNC…GFKP), and 459-489 (SQET…MAES).

This sequence belongs to the PPR family. P subfamily.

This chain is Pentatricopeptide repeat-containing protein At2g15980, found in Arabidopsis thaliana (Mouse-ear cress).